The sequence spans 415 residues: Esterase FrsA (415 aa).

Belongs to the FrsA family.

The enzyme catalyses a carboxylic ester + H2O = an alcohol + a carboxylate + H(+). In terms of biological role, catalyzes the hydrolysis of esters. The chain is Esterase FrsA from Vibrio parahaemolyticus serotype O3:K6 (strain RIMD 2210633).